Reading from the N-terminus, the 185-residue chain is Heavy metal-associated isoprenylated plant protein 11 (185 aa).

The 68-residue stretch at 39–106 (QQNTNVVFKL…ICKHVAIIAA (68 aa)) folds into the HMA domain. Basic and acidic residues predominate over residues 109–158 (IREPEQNRNPVTRREPNREPEQNRSRVTRREPSREPEPNRAPLARRESRP). Residues 109-185 (IREPEQNRNP…GENSDGCIIM (77 aa)) form a disordered region. Cysteine 182 carries the post-translational modification Cysteine methyl ester. Cysteine 182 is lipidated: S-farnesyl cysteine. The propeptide at 183–185 (IIM) is removed in mature form.

This sequence belongs to the HIPP family.

Probable heavy-metal-binding protein. This is Heavy metal-associated isoprenylated plant protein 11 from Arabidopsis thaliana (Mouse-ear cress).